The chain runs to 146 residues: Large ribosomal subunit protein uL15 (146 aa).

The tract at residues 1-56 is disordered; that stretch reads MGLRLNELSPGVGAKKTAQRRGRGIGSGLGKTGGRGVKGQKSRSGSSVRSGFEGGQ. Gly residues predominate over residues 24–37; sequence GIGSGLGKTGGRGV.

This sequence belongs to the universal ribosomal protein uL15 family. Part of the 50S ribosomal subunit.

Functionally, binds to the 23S rRNA. The sequence is that of Large ribosomal subunit protein uL15 from Psychrobacter arcticus (strain DSM 17307 / VKM B-2377 / 273-4).